The primary structure comprises 143 residues: Transcriptional regulator MraZ (143 aa).

SpoVT-AbrB domains follow at residues 5 to 47 (EYHH…PIEE) and 76 to 119 (AMES…SAER).

This sequence belongs to the MraZ family. Forms oligomers.

The protein resides in the cytoplasm. It is found in the nucleoid. This is Transcriptional regulator MraZ from Lactobacillus johnsonii (strain CNCM I-12250 / La1 / NCC 533).